Here is a 141-residue protein sequence, read N- to C-terminus: Galactose-6-phosphate isomerase subunit LacA 1 (141 aa).

Belongs to the LacAB/RpiB family. Heteromultimeric protein consisting of LacA and LacB.

It carries out the reaction aldehydo-D-galactose 6-phosphate = keto-D-tagatose 6-phosphate. The protein operates within carbohydrate metabolism; D-galactose 6-phosphate degradation; D-tagatose 6-phosphate from D-galactose 6-phosphate: step 1/1. This is Galactose-6-phosphate isomerase subunit LacA 1 from Streptococcus pyogenes serotype M1.